A 263-amino-acid chain; its full sequence is MTMSVNKSTLVLKVGGALMQCEMGMARLMETAAKMIASGQQLIMVHGGGCLVEEQLTANGMTTEKLDGLRVTPQEQVPVIVGALAGTSNKILQGAAIKAGVTCVGMSLGDGDMVSAKVKDPRLGFVGEVSPKSATYLEFILSQGWMPIVSSIAIDAAGQLLNVNADQAATVLAKLVDGKLVLLSDVSGVLDGKGQLIKSLNRSQVEELTNIGVIEKGMKVKVEAALEVAESMGQPVQVASWRHAEQLIALSNGEAVGTQIQPD.

Residues 48–49, R70, and N162 contribute to the substrate site; that span reads GG.

Belongs to the acetylglutamate kinase family. ArgB subfamily.

It localises to the cytoplasm. It catalyses the reaction N-acetyl-L-glutamate + ATP = N-acetyl-L-glutamyl 5-phosphate + ADP. The protein operates within amino-acid biosynthesis; L-arginine biosynthesis; N(2)-acetyl-L-ornithine from L-glutamate: step 2/4. Functionally, catalyzes the ATP-dependent phosphorylation of N-acetyl-L-glutamate. This chain is Acetylglutamate kinase, found in Shewanella sediminis (strain HAW-EB3).